Consider the following 298-residue polypeptide: Apolipoprotein E (298 aa).

A signal peptide spans 1–18; sequence MKVLWAALVVTLLAGCRA. Tandem repeats lie at residues 74 to 94, 95 to 116, 117 to 138, 139 to 160, 161 to 182, 183 to 203, 204 to 221, and 222 to 243. The segment at 95–243 is 8 X 22 AA approximate tandem repeats; that stretch reads GPVAEDTKAR…DRLEEVREQM (149 aa). M137 carries the methionine sulfoxide modification. S141 carries the phosphoserine modification. The LDL and other lipoprotein receptors binding stretch occupies residues 151–161; sequence SHLRKMRKRLQ. 155–158 is a binding site for heparin; it reads KMRK. Positions 203-271 are lipid-binding and lipoprotein association; it reads QALTSQPLQE…KSWFEPMMED (69 aa). 217–224 serves as a coordination point for heparin; that stretch reads WGEQMRGR. Positions 259–271 are specificity for association with VLDL; sequence ARLKSWFEPMMED.

Belongs to the apolipoprotein A1/A4/E family. In terms of assembly, homotetramer. May interact with ABCA1; functionally associated with ABCA1 in the biogenesis of HDLs. May interact with APP/A4 amyloid-beta peptide; the interaction is extremely stable in vitro but its physiological significance is unclear. May interact with MAPT. May interact with MAP2. In the cerebrospinal fluid, interacts with secreted SORL1. Interacts with PMEL; this allows the loading of PMEL luminal fragment on ILVs to induce fibril nucleation. APOE exists as multiple glycosylated and sialylated glycoforms within cells and in plasma. The extent of glycosylation and sialylation are tissue and context specific. In terms of processing, glycated in plasma VLDL. Post-translationally, phosphorylated by FAM20C in the extracellular medium.

Its subcellular location is the secreted. It is found in the extracellular space. The protein resides in the extracellular matrix. It localises to the extracellular vesicle. The protein localises to the endosome. Its subcellular location is the multivesicular body. In terms of biological role, APOE is an apolipoprotein, a protein associating with lipid particles, that mainly functions in lipoprotein-mediated lipid transport between organs via the plasma and interstitial fluids. APOE is a core component of plasma lipoproteins and is involved in their production, conversion and clearance. Apolipoproteins are amphipathic molecules that interact both with lipids of the lipoprotein particle core and the aqueous environment of the plasma. As such, APOE associates with chylomicrons, chylomicron remnants, very low density lipoproteins (VLDL) and intermediate density lipoproteins (IDL) but shows a preferential binding to high-density lipoproteins (HDL). It also binds a wide range of cellular receptors including the LDL receptor/LDLR, the LDL receptor-related proteins LRP1, LRP2 and LRP8 and the very low-density lipoprotein receptor/VLDLR that mediate the cellular uptake of the APOE-containing lipoprotein particles. Finally, APOE also has a heparin-binding activity and binds heparan-sulfate proteoglycans on the surface of cells, a property that supports the capture and the receptor-mediated uptake of APOE-containing lipoproteins by cells. A main function of APOE is to mediate lipoprotein clearance through the uptake of chylomicrons, VLDLs, and HDLs by hepatocytes. APOE is also involved in the biosynthesis by the liver of VLDLs as well as their uptake by peripheral tissues ensuring the delivery of triglycerides and energy storage in muscle, heart and adipose tissues. By participating in the lipoprotein-mediated distribution of lipids among tissues, APOE plays a critical role in plasma and tissues lipid homeostasis. APOE is also involved in two steps of reverse cholesterol transport, the HDLs-mediated transport of cholesterol from peripheral tissues to the liver, and thereby plays an important role in cholesterol homeostasis. First, it is functionally associated with ABCA1 in the biogenesis of HDLs in tissues. Second, it is enriched in circulating HDLs and mediates their uptake by hepatocytes. APOE also plays an important role in lipid transport in the central nervous system, regulating neuron survival and sprouting. The protein is Apolipoprotein E (APOE) of Cavia tschudii (Montane guinea pig).